A 241-amino-acid chain; its full sequence is Sugar fermentation stimulation protein homolog (241 aa).

It belongs to the SfsA family.

This is Sugar fermentation stimulation protein homolog from Hahella chejuensis (strain KCTC 2396).